We begin with the raw amino-acid sequence, 369 residues long: Protein arginine N-methyltransferase 1-A (369 aa).

One can recognise an SAM-dependent MTase PRMT-type domain in the interval 48–369 (KDYYFDSYAH…LSCSTDYRMR (322 aa)). S-adenosyl-L-methionine-binding residues include histidine 61, arginine 70, glycine 94, glutamate 116, and glutamate 145. Catalysis depends on residues glutamate 160 and glutamate 169.

Belongs to the class I-like SAM-binding methyltransferase superfamily. Protein arginine N-methyltransferase family. In terms of assembly, homodimer. Homooctamer; individual homodimers associates to form a homooctamer and homooligomerization is required for proper localization to the cell membrane. Individual homodimers can associate to form a homohexamer. Component of a complex with lsm14a/rap55a. Interacts with cirbp.

It is found in the nucleus. It localises to the nucleoplasm. The protein resides in the cytoplasm. Its subcellular location is the cytosol. The enzyme catalyses L-arginyl-[protein] + 2 S-adenosyl-L-methionine = N(omega),N(omega)-dimethyl-L-arginyl-[protein] + 2 S-adenosyl-L-homocysteine + 2 H(+). The catalysed reaction is L-arginyl-[protein] + S-adenosyl-L-methionine = N(omega)-methyl-L-arginyl-[protein] + S-adenosyl-L-homocysteine + H(+). It carries out the reaction N(omega)-methyl-L-arginyl-[protein] + S-adenosyl-L-methionine = N(omega),N(omega)-dimethyl-L-arginyl-[protein] + S-adenosyl-L-homocysteine + H(+). Its function is as follows. Arginine methyltransferase that methylates (mono and asymmetric dimethylation) the guanidino nitrogens of arginyl residues present in target proteins. Constitutes the main enzyme that mediates monomethylation and asymmetric dimethylation of histone H4 'Arg-4' (H4R3me1 and H4R3me2a, respectively), a specific tag for epigenetic transcriptional activation. Methylates cirbp to regulate its subcellular location. Acts transiently during metamorphosis as a transcription coactivator, enhancing thyroid hormone (T3) receptor (TR)-mediated transcription by enhancing TR binding to the T3 response element (TRE), and histone modification through recruitment of other coactivators. This Xenopus laevis (African clawed frog) protein is Protein arginine N-methyltransferase 1-A (prmt1-a).